Here is a 1224-residue protein sequence, read N- to C-terminus: Probable serine/threonine-protein kinase DDB_G0292350 (1224 aa).

2 disordered regions span residues 57 to 98 (MSGS…STQR) and 252 to 284 (SSPS…DISN). 2 stretches are compositionally biased toward low complexity: residues 58–74 (SGSI…FTSS) and 83–95 (SSSN…SDNS). Coiled-coil stretches lie at residues 352 to 381 (LFKQ…KQNN) and 540 to 569 (DVQL…EYLT). Disordered regions lie at residues 693-784 (QPIP…FVIT) and 815-836 (FTNN…TNNI). Positions 743–768 (NNNNNNNNNINNNNINNNNINNNKNG) are enriched in low complexity. The segment covering 772–784 (GETPSPSSSFVIT) has biased composition (polar residues). The Protein kinase domain maps to 935-1193 (FRDKIKLGTG…PEMLLHHTFL (259 aa)). ATP-binding positions include 941 to 949 (LGTGAFGNV) and Lys-964. Asp-1063 serves as the catalytic Proton acceptor.

The protein belongs to the protein kinase superfamily. Ser/Thr protein kinase family. Mg(2+) is required as a cofactor.

It carries out the reaction L-seryl-[protein] + ATP = O-phospho-L-seryl-[protein] + ADP + H(+). The catalysed reaction is L-threonyl-[protein] + ATP = O-phospho-L-threonyl-[protein] + ADP + H(+). The chain is Probable serine/threonine-protein kinase DDB_G0292350 from Dictyostelium discoideum (Social amoeba).